The chain runs to 173 residues: Endosomal/vacuolar adapter protein YPT35 (173 aa).

A PX domain is found at 40–173 (ERAFVTNCTI…LVIQFLRPRK (134 aa)).

Belongs to the YPT35 family.

The protein localises to the endosome membrane. The protein resides in the vacuole membrane. Recruits the lipid transfer protein VPS13 to endosomal and vacuolar membranes. This Candida glabrata (strain ATCC 2001 / BCRC 20586 / JCM 3761 / NBRC 0622 / NRRL Y-65 / CBS 138) (Yeast) protein is Endosomal/vacuolar adapter protein YPT35 (YPT35).